Here is a 342-residue protein sequence, read N- to C-terminus: N-acetyl-gamma-glutamyl-phosphate reductase (342 aa).

The active site involves cysteine 148.

Belongs to the NAGSA dehydrogenase family. Type 1 subfamily.

It is found in the cytoplasm. It catalyses the reaction N-acetyl-L-glutamate 5-semialdehyde + phosphate + NADP(+) = N-acetyl-L-glutamyl 5-phosphate + NADPH + H(+). It participates in amino-acid biosynthesis; L-arginine biosynthesis; N(2)-acetyl-L-ornithine from L-glutamate: step 3/4. In terms of biological role, catalyzes the NADPH-dependent reduction of N-acetyl-5-glutamyl phosphate to yield N-acetyl-L-glutamate 5-semialdehyde. The protein is N-acetyl-gamma-glutamyl-phosphate reductase of Methanococcus vannielii (strain ATCC 35089 / DSM 1224 / JCM 13029 / OCM 148 / SB).